The following is a 227-amino-acid chain: MIHHIPNVLSKEQVQYFRNEMDKIEWVNGKVTAGTLSATVKRNQQLPEDHPLTHHLSNIILEALGTHPLFLSAAIPLDIIPPLFNRYENQESFGFHVDNSIRRIRGTNERLRTDLSCTLFLSEPEEYEGGDLVVEDTYGYHEVKLPAGDMILYPSTSLHEVTAITSGCRIASFFWVQSMVRDDAERHMLFNLDQTVQNLRMQLGDNHSEVIKLTNLYHNLMRKWAEL.

Residues 78 to 178 (DIIPPLFNRY…RIASFFWVQS (101 aa)) enclose the Fe2OG dioxygenase domain. Residues histidine 96, aspartate 98, and histidine 159 each coordinate Fe cation. Residue arginine 169 participates in 2-oxoglutarate binding.

It depends on Fe(2+) as a cofactor. Requires L-ascorbate as cofactor.

The sequence is that of PKHD-type hydroxylase ACICU_00484 from Acinetobacter baumannii (strain ACICU).